Consider the following 417-residue polypeptide: Aminoacyltransferase FemB (417 aa).

It belongs to the FemABX family.

It localises to the cytoplasm. The enzyme catalyses MurNAc-L-Ala-D-isoglutaminyl-L-Lys-(N(6)-tri-Gly)-D-Ala-D-Ala-diphospho-di-trans,octa-cis-undecaprenyl-GlcNAc + 2 glycyl-tRNA(Gly) = MurNAc-L-Ala-D-isoglutaminyl-L-Lys-(N(6)-penta-Gly)-D-Ala-D-Ala-diphospho-di-trans,octa-cis-undecaprenyl-GlcNAc + 2 tRNA(Gly) + 2 H(+). In terms of biological role, catalyzes the incorporation of amino acid(s) into the interchain peptide bridge of peptidoglycan, using aminoacyl-tRNA as amino acid donor. The polypeptide is Aminoacyltransferase FemB (femB) (Staphylococcus epidermidis (strain ATCC 12228 / FDA PCI 1200)).